The following is a 181-amino-acid chain: Oligoribonuclease (181 aa).

Residues 8 to 171 (LIWIDLEMTG…DDIRESIAEL (164 aa)) form the Exonuclease domain. Residue Tyr129 is part of the active site.

Belongs to the oligoribonuclease family.

It localises to the cytoplasm. Its function is as follows. 3'-to-5' exoribonuclease specific for small oligoribonucleotides. The sequence is that of Oligoribonuclease from Vibrio vulnificus (strain CMCP6).